The chain runs to 1598 residues: Serine/threonine-protein kinase Nek1 (1598 aa).

The Protein kinase domain maps to 106 to 380; the sequence is YEVIRQIGAG…ALQCLGYTIF (275 aa). Residues 112–120 and lysine 135 each bind ATP; that span reads IGAGRFGEV. Aspartate 240 (proton acceptor) is an active-site residue.

It belongs to the protein kinase superfamily. NEK Ser/Thr protein kinase family. NIMA subfamily.

The protein resides in the cytoplasm. Its subcellular location is the cytoskeleton. It localises to the microtubule organizing center. The protein localises to the centrosome. It is found in the spindle pole. The enzyme catalyses L-seryl-[protein] + ATP = O-phospho-L-seryl-[protein] + ADP + H(+). It carries out the reaction L-threonyl-[protein] + ATP = O-phospho-L-threonyl-[protein] + ADP + H(+). Its activity is regulated as follows. Phosphorylation status of the T-loop (amino acids 267-293) modulates kinase activity and subcellular localization of the protein. Its function is as follows. Probable serine/threonine-protein kinase. Involved in controlling centrosome splitting. Promotes separation of the centrosome outer cores. The polypeptide is Serine/threonine-protein kinase Nek1 (Toxoplasma gondii (strain ATCC 50611 / Me49)).